The sequence spans 162 residues: Nucleotide-binding protein Mpe_A3039 (162 aa).

Belongs to the YajQ family.

Nucleotide-binding protein. In Methylibium petroleiphilum (strain ATCC BAA-1232 / LMG 22953 / PM1), this protein is Nucleotide-binding protein Mpe_A3039.